A 171-amino-acid chain; its full sequence is S-ribosylhomocysteine lyase (171 aa).

Positions 54, 58, and 128 each coordinate Fe cation.

It belongs to the LuxS family. Homodimer. Requires Fe cation as cofactor.

The catalysed reaction is S-(5-deoxy-D-ribos-5-yl)-L-homocysteine = (S)-4,5-dihydroxypentane-2,3-dione + L-homocysteine. Its function is as follows. Involved in the synthesis of autoinducer 2 (AI-2) which is secreted by bacteria and is used to communicate both the cell density and the metabolic potential of the environment. The regulation of gene expression in response to changes in cell density is called quorum sensing. Catalyzes the transformation of S-ribosylhomocysteine (RHC) to homocysteine (HC) and 4,5-dihydroxy-2,3-pentadione (DPD). The chain is S-ribosylhomocysteine lyase from Citrobacter koseri (strain ATCC BAA-895 / CDC 4225-83 / SGSC4696).